The chain runs to 238 residues: Ribitol-5-phosphate cytidylyltransferase 2 (238 aa).

CTP-binding positions include 7–10 and 81–87; these read LAGG and GTDRNET.

It belongs to the IspD/TarI cytidylyltransferase family. TarI subfamily. Heterodimer together with TarJ.

The catalysed reaction is D-ribitol 5-phosphate + CTP + H(+) = CDP-L-ribitol + diphosphate. Its pathway is cell wall biogenesis; poly(ribitol phosphate) teichoic acid biosynthesis. Its function is as follows. Catalyzes the transfer of the cytidylyl group of CTP to D-ribitol 5-phosphate. The protein is Ribitol-5-phosphate cytidylyltransferase 2 of Staphylococcus aureus (strain NCTC 8325 / PS 47).